The chain runs to 462 residues: ATP synthase subunit beta (462 aa).

151 to 158 (GGAGVGKT) provides a ligand contact to ATP.

This sequence belongs to the ATPase alpha/beta chains family. In terms of assembly, F-type ATPases have 2 components, CF(1) - the catalytic core - and CF(0) - the membrane proton channel. CF(1) has five subunits: alpha(3), beta(3), gamma(1), delta(1), epsilon(1). CF(0) has three main subunits: a(1), b(2) and c(9-12). The alpha and beta chains form an alternating ring which encloses part of the gamma chain. CF(1) is attached to CF(0) by a central stalk formed by the gamma and epsilon chains, while a peripheral stalk is formed by the delta and b chains.

It localises to the cell inner membrane. The catalysed reaction is ATP + H2O + 4 H(+)(in) = ADP + phosphate + 5 H(+)(out). Functionally, produces ATP from ADP in the presence of a proton gradient across the membrane. The catalytic sites are hosted primarily by the beta subunits. This Chlorobaculum parvum (strain DSM 263 / NCIMB 8327) (Chlorobium vibrioforme subsp. thiosulfatophilum) protein is ATP synthase subunit beta.